Consider the following 832-residue polypeptide: Protein P (832 aa).

A terminal protein domain (TP) region spans residues 1-177 (MPLSYQHFRR…FCGSPYSWEQ (177 aa)). Residues 178–335 (KLQHGAESFH…YCLSHIVNLL (158 aa)) are spacer. Disordered stretches follow at residues 186–229 (FHQQ…QGRS) and 275–305 (YPTV…RSQS). The polymerase/reverse transcriptase domain (RT) stretch occupies residues 336-679 (EDWGPCTEHG…YMNLYPVARQ (344 aa)). Residues 346–589 (EHHIRIPRTP…YSLHFMGYVI (244 aa)) enclose the Reverse transcriptase domain. 3 residues coordinate Mg(2+): Asp418, Asp540, and Asp541.

This sequence belongs to the hepadnaviridae P protein family.

It carries out the reaction DNA(n) + a 2'-deoxyribonucleoside 5'-triphosphate = DNA(n+1) + diphosphate. The catalysed reaction is Endonucleolytic cleavage to 5'-phosphomonoester.. With respect to regulation, activated by host HSP70 and HSP40 in vitro to be able to bind the epsilon loop of the pgRNA. Because deletion of the RNase H region renders the protein partly chaperone-independent, the chaperones may be needed indirectly to relieve occlusion of the RNA-binding site by this domain. Inhibited by several reverse-transcriptase inhibitors: Lamivudine, Adefovir and Entecavir. Functionally, multifunctional enzyme that converts the viral RNA genome into dsDNA in viral cytoplasmic capsids. This enzyme displays a DNA polymerase activity that can copy either DNA or RNA templates, and a ribonuclease H (RNase H) activity that cleaves the RNA strand of RNA-DNA heteroduplexes in a partially processive 3'- to 5'-endonucleasic mode. Neo-synthesized pregenomic RNA (pgRNA) are encapsidated together with the P protein, and reverse-transcribed inside the nucleocapsid. Initiation of reverse-transcription occurs first by binding the epsilon loop on the pgRNA genome, and is initiated by protein priming, thereby the 5'-end of (-)DNA is covalently linked to P protein. Partial (+)DNA is synthesized from the (-)DNA template and generates the relaxed circular DNA (RC-DNA) genome. After budding and infection, the RC-DNA migrates in the nucleus, and is converted into a plasmid-like covalently closed circular DNA (cccDNA). The activity of P protein does not seem to be necessary for cccDNA generation, and is presumably released from (+)DNA by host nuclear DNA repair machinery. The polypeptide is Protein P (Homo sapiens (Human)).